Consider the following 728-residue polypeptide: Elongation factor 2 (728 aa).

The tr-type G domain occupies 18–258 (KFIRNIGIVA…MVIRHLPSPI (241 aa)). Residues 27–34 (AHIDHGKT), 93–97 (DTPGH), and 147–150 (NKVD) contribute to the GTP site. The residue at position 594 (His-594) is a Diphthamide.

This sequence belongs to the TRAFAC class translation factor GTPase superfamily. Classic translation factor GTPase family. EF-G/EF-2 subfamily.

Its subcellular location is the cytoplasm. Functionally, catalyzes the GTP-dependent ribosomal translocation step during translation elongation. During this step, the ribosome changes from the pre-translocational (PRE) to the post-translocational (POST) state as the newly formed A-site-bound peptidyl-tRNA and P-site-bound deacylated tRNA move to the P and E sites, respectively. Catalyzes the coordinated movement of the two tRNA molecules, the mRNA and conformational changes in the ribosome. This Archaeoglobus fulgidus (strain ATCC 49558 / DSM 4304 / JCM 9628 / NBRC 100126 / VC-16) protein is Elongation factor 2 (fusA).